Here is a 66-residue protein sequence, read N- to C-terminus: Movement protein TGBp3 (66 aa).

At 1 to 2 the chain is on the lumenal side; the sequence is MD. A helical membrane pass occupies residues 3 to 23; that stretch reads FTTLIIIGVYLLVFIVYFAKI. The Cytoplasmic segment spans residues 24-66; the sequence is NTSVCTISISGASIEISGCDNPTLFEILPKLRPFNHGLSLPSN.

This sequence belongs to the Tymovirales TGBp3 protein family.

The protein resides in the host endoplasmic reticulum membrane. In terms of biological role, plays a role in viral cell-to-cell propagation, by facilitating genome transport to neighboring plant cells through plasmosdesmata. May induce the formation of granular vesicles derived from the Endoplasmic reticulum, which align on actin filaments. The chain is Movement protein TGBp3 from Trifolium (WCMV).